The primary structure comprises 1026 residues: Probable DNA-directed RNA polymerase II subunit RPB1 homolog (1026 aa).

Residues cysteine 62, cysteine 65, cysteine 72, histidine 75, cysteine 102, cysteine 105, and cysteine 142 each coordinate Zn(2+). Positions 588, 590, and 592 each coordinate Mg(2+).

The protein belongs to the RNA polymerase beta' chain family.

The enzyme catalyses RNA(n) + a ribonucleoside 5'-triphosphate = RNA(n+1) + diphosphate. In terms of biological role, component of the DNA-dependent RNA polymerase that catalyzes the transcription of DNA into RNA using the four ribonucleoside triphosphates as substrates. Largest and catalytic component of RNA polymerase II which synthesizes mRNA precursors and many functional non-coding RNAs. Forms the polymerase active center together with the second largest subunit. This chain is Probable DNA-directed RNA polymerase II subunit RPB1 homolog, found in Acheta domesticus (House cricket).